An 855-amino-acid polypeptide reads, in one-letter code: Valine--tRNA ligase (855 aa).

Positions 44-54 (PYPTGNFHIGN) match the 'HIGH' region motif. A 'KMSKS' region motif is present at residues 522-526 (KMSKS). Position 525 (Lys525) interacts with ATP.

The protein belongs to the class-I aminoacyl-tRNA synthetase family. ValS type 2 subfamily.

The protein localises to the cytoplasm. The catalysed reaction is tRNA(Val) + L-valine + ATP = L-valyl-tRNA(Val) + AMP + diphosphate. Its function is as follows. Catalyzes the attachment of valine to tRNA(Val). As ValRS can inadvertently accommodate and process structurally similar amino acids such as threonine, to avoid such errors, it has a 'posttransfer' editing activity that hydrolyzes mischarged Thr-tRNA(Val) in a tRNA-dependent manner. The polypeptide is Valine--tRNA ligase (Methanothrix thermoacetophila (strain DSM 6194 / JCM 14653 / NBRC 101360 / PT) (Methanosaeta thermophila)).